The chain runs to 823 residues: Aminopeptidase O (823 aa).

His481 contacts Zn(2+). Glu482 functions as the Proton acceptor in the catalytic mechanism. Zn(2+) contacts are provided by His485 and Glu504. The Nucleolar localization signal motif lies at 693–703 (RRPRKRKRGKR).

The protein belongs to the peptidase M1 family. The cofactor is Zn(2+). As to expression, expressed in testis, heart, brain, lung, liver, skeletal muscle, kidney and ovary. Expressed in vascular tissues.

The protein resides in the nucleus. It is found in the nucleolus. It localises to the cytoplasm. Aminopeptidase which catalyzes the hydrolysis of amino acid residues from the N-terminus of peptide or protein substrates. The protein is Aminopeptidase O (Aopep) of Mus musculus (Mouse).